The primary structure comprises 181 residues: MEINNEKKKLSRQSSSFRLRSPSLNALRLHRVFDLFDKNNDGFITVEELSQALSRLGLDADFSDLKSTVDSFIKPDKTGLRFDDFAALHKTLDESFFGGEGSCCDGSPESDLEEAFNVFDEDGDGFISAVELQKVLKKLGLPEAGEIEQVEKMIVSVDSNHDGRVDFFEFKNMMQTVVVPS.

3 EF-hand domains span residues 24–59 (LNAL…LGLD), 107–142 (SPES…LGLP), and 145–180 (GEIE…VVVP). Ca(2+)-binding residues include aspartate 37, asparagine 39, aspartate 41, glutamate 48, aspartate 120, aspartate 122, aspartate 124, glutamate 131, aspartate 158, asparagine 160, aspartate 162, arginine 164, and glutamate 169.

In terms of tissue distribution, expressed specifically in roots.

Calcium-binding protein that may mediate calcium-dependent signal during plant defense response. The polypeptide is Probable calcium-binding protein CML43 (CML43) (Arabidopsis thaliana (Mouse-ear cress)).